The primary structure comprises 95 residues: DNA-directed RNA polymerase subunit omega (95 aa).

The protein belongs to the RNA polymerase subunit omega family. The RNAP catalytic core consists of 2 alpha, 1 beta, 1 beta' and 1 omega subunit. When a sigma factor is associated with the core the holoenzyme is formed, which can initiate transcription.

The enzyme catalyses RNA(n) + a ribonucleoside 5'-triphosphate = RNA(n+1) + diphosphate. Its function is as follows. Promotes RNA polymerase assembly. Latches the N- and C-terminal regions of the beta' subunit thereby facilitating its interaction with the beta and alpha subunits. The chain is DNA-directed RNA polymerase subunit omega from Colwellia psychrerythraea (strain 34H / ATCC BAA-681) (Vibrio psychroerythus).